The sequence spans 359 residues: 5-amino-6-(D-ribitylamino)uracil--L-tyrosine 4-hydroxyphenyl transferase (359 aa).

One can recognise a Radical SAM core domain in the interval 45–282 (VTYVVNANIN…VYAISRIFFK (238 aa)). Residues C59, C63, and C66 each contribute to the [4Fe-4S] cluster site.

The protein belongs to the radical SAM superfamily. CofH family. In terms of assembly, consists of two subunits, CofG and CofH. [4Fe-4S] cluster serves as cofactor.

The enzyme catalyses 5-amino-6-(D-ribitylamino)uracil + L-tyrosine + S-adenosyl-L-methionine = 5-amino-5-(4-hydroxybenzyl)-6-(D-ribitylimino)-5,6-dihydrouracil + 2-iminoacetate + 5'-deoxyadenosine + L-methionine + H(+). The protein operates within cofactor biosynthesis; coenzyme F0 biosynthesis. Catalyzes the radical-mediated synthesis of 5-amino-5-(4-hydroxybenzyl)-6-(D-ribitylimino)-5,6-dihydrouracil from 5-amino-6-(D-ribitylamino)uracil and L-tyrosine. The protein is 5-amino-6-(D-ribitylamino)uracil--L-tyrosine 4-hydroxyphenyl transferase of Methanococcus maripaludis (strain C7 / ATCC BAA-1331).